The sequence spans 701 residues: Arachidonate 12-lipoxygenase, 12R-type (701 aa).

One can recognise a PLAT domain in the interval 2 to 119; the sequence is ATYKVKVATG…TLALREATGK (118 aa). One can recognise a Lipoxygenase domain in the interval 120 to 701; that stretch reads ITADDTLPIL…PVLIENSISI (582 aa). Fe cation-binding residues include histidine 398, histidine 403, histidine 578, asparagine 582, and isoleucine 701.

Belongs to the lipoxygenase family. Fe cation is required as a cofactor. In terms of tissue distribution, expressed in skin epidermis and other stratified epithelia including tongue and forestomach. Low levels of expression are found in trachea, brain and lung. Not expressed in intestine, liver, kidney, adipose tissue, muscle or hematopoietic cells.

The protein resides in the cytoplasm. The protein localises to the perinuclear region. It catalyses the reaction 1-O-methyl-(5Z,8Z,11Z,14Z)-eicosatetraenoate + O2 = 1-O-methyl (5Z,8Z,10E,12R,14Z)-hydroperoxyiecosatetraenoate. The catalysed reaction is 1-O-methyl-(5Z,8Z,11Z,14Z)-eicosatetraenoate + O2 = 1-O-methyl-8-hydroperoxy-(5Z,9E,11Z,14Z)-eicosatetraenoate. The enzyme catalyses (5Z,8Z,11Z,14Z)-eicosatetraenoate + O2 = (12R)-hydroperoxy-(5Z,8Z,10E,14Z)-eicosatetraenoate. It carries out the reaction N-[omega-(9Z,12Z)-octadecadienoyloxy]acyl-beta-D-glucosyl-(1&lt;-&gt;1)-octadecasphing-4E-enine + O2 = N-[omega-(9R)-hydroperoxy-(10E,12Z)-octadecadienoyloxy]acyl-beta-D-glucosyl-(1&lt;-&gt;1)-octadecasphing-4E-enine. It catalyses the reaction a N-[omega-(9Z,12Z)-octadecadienoyloxy]-acylsphin-4E-enine + O2 = a N-[omega-(9R)-hydroperoxy-(10E,12Z)-octadecadienoyloxy]-acylsphin-4E-enine. The catalysed reaction is (6Z,9Z,12Z)-octadecatrienoate + O2 = 10-hydroperoxy-(6Z,8E,12Z)-octadecatrienoate. The enzyme catalyses (4Z,7Z,10Z,13Z,16Z,19Z)-docosahexaenoate + O2 = 14-hydroperoxy-(4Z,7Z,10Z,12E,16Z,19Z)-docosahexaenoate. It carries out the reaction (8Z,11Z,14Z)-eicosatrienoate + O2 = (8Z,10E,14Z)-12-hydroperoxyeicosatrienoate. It catalyses the reaction (5Z,8Z,11Z,14Z,17Z)-eicosapentaenoate + O2 = (5Z,7Z,8Z,10E,14Z,17Z)-12-hydroperoxyeicosapentaenoate. The catalysed reaction is (6Z,9Z,12Z)-octadecatrienoate + O2 = 10R-hydroperoxy-(6Z,8E,12Z)-octadecatrienoate. The enzyme catalyses 1-O-methyl-(5Z,8Z,11Z,14Z)-eicosatetraenoate + O2 = 1-O-methyl-(8R)-hydroperoxy-(5Z,9E,11Z,14Z)-eicosatrienoate. It carries out the reaction 1-O-methyl-(9Z,12Z)-octadecadienoate + O2 = 1-O-methyl-(9R)-hydroperoxy-(10E,12Z)-octadecadienoate. It catalyses the reaction 1-O-methyl-20-hydroxy-(5Z,8Z,11Z,14Z)-eicosatetraenoate + O2 = 1-O-methyl-8-hydroperoxy-20-hydroxy-(5Z,9E,11Z,14Z)-eicosatetraenoate. The catalysed reaction is 1-O-methyl-20-hydroxy-(5Z,8Z,11Z,14Z)-eicosatetraenoate + O2 = 1-O-methyl-12-hydroperoxy-20-hydroxy-(5Z,8Z,10E,14Z)-eicosatetraenoate. The enzyme catalyses 1-O-methyl-20-hydroxy-(5Z,8Z,11Z,14Z)-eicosatetraenoate + O2 = 1-O-methyl-9-hydroperoxy-20-hydroxy-(5Z,7E,11Z,14Z)-eicosatetraenoate. It carries out the reaction 1-O-methyl-(9Z,12Z)-octadecadienoate + O2 = 1-O-methyl-(13S)-hydroperoxy-(9Z,11E)-octadecadienoate. Its pathway is lipid metabolism; hydroperoxy eicosatetraenoic acid biosynthesis. It functions in the pathway lipid metabolism; sphingolipid metabolism. Increased by calcium. Its function is as follows. Catalyzes the regio and stereo-specific incorporation of a single molecule of dioxygen into free and esterified polyunsaturated fatty acids generating lipid hydroperoxides that can be further reduced to the corresponding hydroxy species. Does not convert arachidonic acid to (12R)-hydroperoxyeicosatetraenoic acid/(12R)-HPETE. In the skin, acts upstream of ALOXE3 on the lineolate moiety of esterified omega-hydroxyacyl-sphingosine (EOS) ceramides to produce an epoxy-ketone derivative, a crucial step in the conjugation of omega-hydroxyceramide to membrane proteins. Therefore plays a crucial role in the synthesis of corneocytes lipid envelope and the establishment of the skin barrier to water loss. May also play a role in the regulation of the expression of airway mucins. The polypeptide is Arachidonate 12-lipoxygenase, 12R-type (Mus musculus (Mouse)).